The primary structure comprises 323 residues: tRNA dimethylallyltransferase (323 aa).

An ATP-binding site is contributed by 12 to 19 (GPTAAGKT). 14 to 19 (TAAGKT) is a binding site for substrate. Interaction with substrate tRNA regions lie at residues 37-40 (DSAL) and 161-165 (QRLIR).

It belongs to the IPP transferase family. In terms of assembly, monomer. The cofactor is Mg(2+).

The catalysed reaction is adenosine(37) in tRNA + dimethylallyl diphosphate = N(6)-dimethylallyladenosine(37) in tRNA + diphosphate. Functionally, catalyzes the transfer of a dimethylallyl group onto the adenine at position 37 in tRNAs that read codons beginning with uridine, leading to the formation of N6-(dimethylallyl)adenosine (i(6)A). The sequence is that of tRNA dimethylallyltransferase from Pseudomonas putida (strain ATCC 47054 / DSM 6125 / CFBP 8728 / NCIMB 11950 / KT2440).